Here is a 208-residue protein sequence, read N- to C-terminus: Large ribosomal subunit protein uL4 (208 aa).

The interval 46–97 (QGTHKTKTRAEVRGGGKKPYRQKGTGNARQGSSRSPIMVGGGTIFGPQPRSY) is disordered. Residues 69–80 (GTGNARQGSSRS) show a composition bias toward polar residues.

Belongs to the universal ribosomal protein uL4 family. In terms of assembly, part of the 50S ribosomal subunit.

In terms of biological role, one of the primary rRNA binding proteins, this protein initially binds near the 5'-end of the 23S rRNA. It is important during the early stages of 50S assembly. It makes multiple contacts with different domains of the 23S rRNA in the assembled 50S subunit and ribosome. Functionally, forms part of the polypeptide exit tunnel. In Chlorobaculum parvum (strain DSM 263 / NCIMB 8327) (Chlorobium vibrioforme subsp. thiosulfatophilum), this protein is Large ribosomal subunit protein uL4.